The following is a 138-amino-acid chain: MRFSNNFKKAPYLLQALLNVCLFFLAIALSGLLISETWYIVQFVYKSLFNKVDSYYEMLGELLIFFMYFEFIALIIKYFKSDFHFPLRYFIYIGITAVIRLIIIDHDQAISTFWWAMAILAMICAFFIVNRRNSVVEH.

A run of 4 helical transmembrane segments spans residues 14–34, 56–76, 84–104, and 109–129; these read LQALLNVCLFFLAIALSGLLI, YEMLGELLIFFMYFEFIALII, HFPLRYFIYIGITAVIRLIII, and AISTFWWAMAILAMICAFFIV.

This sequence belongs to the PsiE family.

It is found in the cell membrane. In Bacillus velezensis (strain DSM 23117 / BGSC 10A6 / LMG 26770 / FZB42) (Bacillus amyloliquefaciens subsp. plantarum), this protein is Protein PsiE homolog.